Here is a 385-residue protein sequence, read N- to C-terminus: Muconate cycloisomerase 1-2 (385 aa).

Lys171 is a catalytic residue. Residues Glu226 and Asp251 each coordinate Mn(2+).

The protein belongs to the mandelate racemase/muconate lactonizing enzyme family. Homooctamer. Requires Mn(2+) as cofactor.

It catalyses the reaction (S)-muconolactone = cis,cis-muconate + H(+). The protein operates within aromatic compound metabolism; beta-ketoadipate pathway; 5-oxo-4,5-dihydro-2-furylacetate from catechol: step 2/3. In terms of biological role, catalyzes a syn cycloisomerization. This chain is Muconate cycloisomerase 1-2 (catB2), found in Acinetobacter lwoffii.